The primary structure comprises 92 residues: Small ribosomal subunit protein uS19 (92 aa).

It belongs to the universal ribosomal protein uS19 family.

Protein S19 forms a complex with S13 that binds strongly to the 16S ribosomal RNA. The protein is Small ribosomal subunit protein uS19 of Polynucleobacter asymbioticus (strain DSM 18221 / CIP 109841 / QLW-P1DMWA-1) (Polynucleobacter necessarius subsp. asymbioticus).